The following is a 295-amino-acid chain: Ribosomal protein L11 methyltransferase (295 aa).

Threonine 150, glycine 171, aspartate 193, and asparagine 232 together coordinate S-adenosyl-L-methionine.

The protein belongs to the methyltransferase superfamily. PrmA family.

It is found in the cytoplasm. The catalysed reaction is L-lysyl-[protein] + 3 S-adenosyl-L-methionine = N(6),N(6),N(6)-trimethyl-L-lysyl-[protein] + 3 S-adenosyl-L-homocysteine + 3 H(+). Functionally, methylates ribosomal protein L11. This is Ribosomal protein L11 methyltransferase from Neisseria meningitidis serogroup C / serotype 2a (strain ATCC 700532 / DSM 15464 / FAM18).